Consider the following 432-residue polypeptide: Adenylosuccinate synthetase (432 aa).

GTP contacts are provided by residues 13-19 (GDEGKGK) and 41-43 (GHT). Aspartate 14 (proton acceptor) is an active-site residue. Residues aspartate 14 and glycine 41 each coordinate Mg(2+). IMP is bound by residues 14-17 (DEGK), 39-42 (NAGH), threonine 130, arginine 144, glutamine 225, threonine 240, and arginine 304. Histidine 42 functions as the Proton donor in the catalytic mechanism. 300 to 306 (ATTGRRR) provides a ligand contact to substrate. Residues arginine 306, 332-334 (KLD), and 415-417 (STG) each bind GTP.

Belongs to the adenylosuccinate synthetase family. In terms of assembly, homodimer. Requires Mg(2+) as cofactor.

It localises to the cytoplasm. It carries out the reaction IMP + L-aspartate + GTP = N(6)-(1,2-dicarboxyethyl)-AMP + GDP + phosphate + 2 H(+). It functions in the pathway purine metabolism; AMP biosynthesis via de novo pathway; AMP from IMP: step 1/2. In terms of biological role, plays an important role in the de novo pathway of purine nucleotide biosynthesis. Catalyzes the first committed step in the biosynthesis of AMP from IMP. The sequence is that of Adenylosuccinate synthetase from Sodalis glossinidius (strain morsitans).